Consider the following 210-residue polypeptide: Cell division protein SepF (210 aa).

A disordered region spans residues 13–101 (GLADGDEYDE…EPVDPGYRAP (89 aa)). 2 stretches are compositionally biased toward basic and acidic residues: residues 22–70 (EQPR…ERPE) and 83–93 (VEPRRPARPEP).

Belongs to the SepF family. In terms of assembly, homodimer. Interacts with FtsZ.

The protein resides in the cytoplasm. Cell division protein that is part of the divisome complex and is recruited early to the Z-ring. Probably stimulates Z-ring formation, perhaps through the cross-linking of FtsZ protofilaments. Its function overlaps with FtsA. The polypeptide is Cell division protein SepF (Micrococcus luteus (strain ATCC 4698 / DSM 20030 / JCM 1464 / CCM 169 / CCUG 5858 / IAM 1056 / NBRC 3333 / NCIMB 9278 / NCTC 2665 / VKM Ac-2230) (Micrococcus lysodeikticus)).